A 201-amino-acid polypeptide reads, in one-letter code: uncharacterized protein (201 aa).

The chain crosses the membrane as a helical span at residues 11-31 (IWKSLYLLIIVGMLYIGYILI).

Its subcellular location is the membrane. This is an uncharacterized protein from Rickettsia prowazekii (strain Madrid E).